Here is a 360-residue protein sequence, read N- to C-terminus: Peptide chain release factor 1 (360 aa).

At Gln-237 the chain carries N5-methylglutamine.

The protein belongs to the prokaryotic/mitochondrial release factor family. In terms of processing, methylated by PrmC. Methylation increases the termination efficiency of RF1.

It localises to the cytoplasm. In terms of biological role, peptide chain release factor 1 directs the termination of translation in response to the peptide chain termination codons UAG and UAA. The polypeptide is Peptide chain release factor 1 (Azotobacter vinelandii (strain DJ / ATCC BAA-1303)).